The following is a 347-amino-acid chain: NADH-quinone oxidoreductase subunit H (347 aa).

8 helical membrane passes run 25–45, 95–115, 128–148, 168–188, 200–220, 251–271, 284–304, and 324–344; these read ILFM…VAAM, FMFT…FAII, IGIL…LFGG, ISYE…TGSF, GWYI…GVAV, FFIG…CLFF, FIPP…MFIL, and VCLP…LIFS.

It belongs to the complex I subunit 1 family. In terms of assembly, NDH-1 is composed of 14 different subunits. Subunits NuoA, H, J, K, L, M, N constitute the membrane sector of the complex.

It is found in the cell inner membrane. It catalyses the reaction a quinone + NADH + 5 H(+)(in) = a quinol + NAD(+) + 4 H(+)(out). Its function is as follows. NDH-1 shuttles electrons from NADH, via FMN and iron-sulfur (Fe-S) centers, to quinones in the respiratory chain. The immediate electron acceptor for the enzyme in this species is believed to be ubiquinone. Couples the redox reaction to proton translocation (for every two electrons transferred, four hydrogen ions are translocated across the cytoplasmic membrane), and thus conserves the redox energy in a proton gradient. This subunit may bind ubiquinone. The protein is NADH-quinone oxidoreductase subunit H of Psychrobacter arcticus (strain DSM 17307 / VKM B-2377 / 273-4).